We begin with the raw amino-acid sequence, 590 residues long: MRTHYADKVDSSLIDQTITLCGWVHRRRDHGGLIFIDLRDREGLVQVVCNPTESTVFKVAESLRNEYVIKVTGKVHKRPEGTVNPHIPSGEVEIAASDITLLNKSKPLPFNIDEYQEVSEEVRLKFRYLDLRRPEVAQRLKMRSYIIREIRRFLDERGFLDIETPMLTKSTPEGARDYLVPSRTHPGQFFALPQSPQIFKEILMVAGFDRYYQIVRCFRDEDLRADRQPEFTQLDLEMSFVEEKDIQQLMETMIRHLFSTFLNVPLPDPFPRITYDEAIKTYGTDRPDLRNPLTLVDVTDLMKSVEFKVFKEPANNPHGRIAVLRLPKGAELSRKAIDDYTQFVGIYGAKGLAYIKVENIDNGTGGLHSPILKFLPENVIAEILKRTQAQSGDILFFGADKAKIVNESLGALRDRLCADLNLYEGQWKPVWVVDFPMFDREDVGDWQALHHPFTALQETDPEKVIANPGDVLSRAYDMVLNGSEIGGGSIRINDIGMQYAVLKVLGISKEMAEAQFGHLLMALQFGSPPLGGIAFGLDRLVAIMTGASSIRDVIAFPKTQTAQCPLTNAPAQVETLQLETLGLKVSKHRK.

Position 173 (Glu-173) interacts with L-aspartate. An aspartate region spans residues 197–200; it reads QIFK. Position 219 (Arg-219) interacts with L-aspartate. ATP contacts are provided by residues 219-221 and Gln-228; that span reads RDE. Residue His-450 participates in L-aspartate binding. Glu-484 contacts ATP. Arg-491 is a binding site for L-aspartate. 536–539 is an ATP binding site; it reads GLDR.

The protein belongs to the class-II aminoacyl-tRNA synthetase family. Type 1 subfamily. Homodimer.

The protein resides in the cytoplasm. It catalyses the reaction tRNA(Asx) + L-aspartate + ATP = L-aspartyl-tRNA(Asx) + AMP + diphosphate. In terms of biological role, aspartyl-tRNA synthetase with relaxed tRNA specificity since it is able to aspartylate not only its cognate tRNA(Asp) but also tRNA(Asn). Reaction proceeds in two steps: L-aspartate is first activated by ATP to form Asp-AMP and then transferred to the acceptor end of tRNA(Asp/Asn). In Coxiella burnetii (strain RSA 493 / Nine Mile phase I), this protein is Aspartate--tRNA(Asp/Asn) ligase.